We begin with the raw amino-acid sequence, 506 residues long: Maturase K (506 aa).

It belongs to the intron maturase 2 family. MatK subfamily.

Its subcellular location is the plastid. The protein resides in the chloroplast. In terms of biological role, usually encoded in the trnK tRNA gene intron. Probably assists in splicing its own and other chloroplast group II introns. This chain is Maturase K, found in Jurinea cyanoides.